The following is a 332-amino-acid chain: MTSSNISICATEDQMVLQTSLLLRVNVILMTTVAIFTFVLTYRALFILKQRPIFHKSTKILLYTSLIFVNIHEIIFMVIQCVAFIRSFTLSDKPCEIMRTTLECRFKNHVLIFGIAGMNFNQFGLTVDRLLATVIPQTYSHLGSFPGILISILVIGCSIAAPLIIAIGDPYDDIVPNCFFFPQHSAPRANVFLIILSALVIASIFLNLIIIFANKKLEKGTRYYVSQRYQKREALISTRIIVYIAASQFLGMVLYSTIVLTLRLHKSMIPVSMYHNIVWWAYTVPFAAVALPALLIHRINLVGSNRKRVINRITAKVETQEEHMKSLKELWG.

The Extracellular portion of the chain corresponds to 1 to 26 (MTSSNISICATEDQMVLQTSLLLRVN). The chain crosses the membrane as a helical span at residues 27-47 (VILMTTVAIFTFVLTYRALFI). Residues 48–64 (LKQRPIFHKSTKILLYT) lie on the Cytoplasmic side of the membrane. The chain crosses the membrane as a helical span at residues 65 to 85 (SLIFVNIHEIIFMVIQCVAFI). Topologically, residues 86–109 (RSFTLSDKPCEIMRTTLECRFKNH) are extracellular. A helical transmembrane segment spans residues 110 to 132 (VLIFGIAGMNFNQFGLTVDRLLA). Over 133-146 (TVIPQTYSHLGSFP) the chain is Cytoplasmic. Residues 147 to 167 (GILISILVIGCSIAAPLIIAI) form a helical membrane-spanning segment. The Extracellular segment spans residues 168–191 (GDPYDDIVPNCFFFPQHSAPRANV). Residues 192–212 (FLIILSALVIASIFLNLIIIF) form a helical membrane-spanning segment. Topologically, residues 213–239 (ANKKLEKGTRYYVSQRYQKREALISTR) are cytoplasmic. The helical transmembrane segment at 240–260 (IIVYIAASQFLGMVLYSTIVL) threads the bilayer. Topologically, residues 261–276 (TLRLHKSMIPVSMYHN) are extracellular. Residues 277–297 (IVWWAYTVPFAAVALPALLIH) traverse the membrane as a helical segment. Residues 298–332 (RINLVGSNRKRVINRITAKVETQEEHMKSLKELWG) are Cytoplasmic-facing.

It belongs to the nematode receptor-like protein sra family.

The protein resides in the membrane. The protein is Serpentine receptor class alpha-10 of Caenorhabditis briggsae.